The sequence spans 433 residues: Glutamate-1-semialdehyde 2,1-aminomutase (433 aa).

At K269 the chain carries N6-(pyridoxal phosphate)lysine.

It belongs to the class-III pyridoxal-phosphate-dependent aminotransferase family. HemL subfamily. Homodimer. Pyridoxal 5'-phosphate serves as cofactor.

The protein resides in the cytoplasm. The enzyme catalyses (S)-4-amino-5-oxopentanoate = 5-aminolevulinate. It functions in the pathway porphyrin-containing compound metabolism; protoporphyrin-IX biosynthesis; 5-aminolevulinate from L-glutamyl-tRNA(Glu): step 2/2. In Francisella philomiragia subsp. philomiragia (strain ATCC 25017 / CCUG 19701 / FSC 153 / O#319-036), this protein is Glutamate-1-semialdehyde 2,1-aminomutase.